The primary structure comprises 229 residues: 2,3-bisphosphoglycerate-dependent phosphoglycerate mutase 2 (229 aa).

Substrate-binding positions include 8-15 (RHGQSEWN), 21-22 (TG), Arg60, 87-90 (ERHY), Lys98, 114-115 (RR), and 183-184 (GN). His9 acts as the Tele-phosphohistidine intermediate in catalysis. Glu87 serves as the catalytic Proton donor/acceptor.

The protein belongs to the phosphoglycerate mutase family. BPG-dependent PGAM subfamily.

The catalysed reaction is (2R)-2-phosphoglycerate = (2R)-3-phosphoglycerate. It participates in carbohydrate degradation; glycolysis; pyruvate from D-glyceraldehyde 3-phosphate: step 3/5. Catalyzes the interconversion of 2-phosphoglycerate and 3-phosphoglycerate. This Latilactobacillus sakei subsp. sakei (strain 23K) (Lactobacillus sakei subsp. sakei) protein is 2,3-bisphosphoglycerate-dependent phosphoglycerate mutase 2.